We begin with the raw amino-acid sequence, 31 residues long: Cyclotide vibi-G (31 aa).

The segment at residues 1–31 is a cross-link (cyclopeptide (Gly-Asn)); the sequence is GTFPCGESCVFIPCLTSAIGCSCKSKVCYKN. 3 disulfides stabilise this stretch: Cys-5–Cys-21, Cys-9–Cys-23, and Cys-14–Cys-28.

This is a cyclic peptide.

Functionally, probably participates in a plant defense mechanism. Has cytotoxic activity, active against a human lymphoma cell line with an IC(50) of 0.96 uM. This Viola biflora (Yellow wood violet) protein is Cyclotide vibi-G.